An 882-amino-acid chain; its full sequence is DNA mismatch repair protein MutS (882 aa).

Positions 1–22 are disordered; the sequence is MTLPSDFPLEPPATNKDPHRDY. ATP is bound at residue 662 to 669; the sequence is GPNASGKS.

It belongs to the DNA mismatch repair MutS family.

Functionally, this protein is involved in the repair of mismatches in DNA. It is possible that it carries out the mismatch recognition step. This protein has a weak ATPase activity. In Microcystis aeruginosa (strain NIES-843 / IAM M-2473), this protein is DNA mismatch repair protein MutS.